The sequence spans 503 residues: Probable dolichyl pyrophosphate Man9GlcNAc2 alpha-1,3-glucosyltransferase (503 aa).

Topologically, residues 1–46 (MKERIKDKAWRPQFIKLNNPDTSKKIVSQKSKKPEIVDLSSPGNND) are cytoplasmic. A helical transmembrane segment spans residues 47 to 67 (LVTISILCVLLCFQLAISLNP). The Lumenal segment spans residues 68 to 151 (HSGESQPPMY…SRGYESIAHK (84 aa)). The chain crosses the membrane as a helical span at residues 152–172 (LFMRLSAIIPFYIFYLPPLIF). Over 173–181 (YFTRSKKMS) the chain is Cytoplasmic. Residues 182–202 (PILYALALLYPSLLVIDNGHF) form a helical membrane-spanning segment. The Lumenal portion of the chain corresponds to 203 to 211 (QYNSISLGL). The chain crosses the membrane as a helical span at residues 212–232 (FLATYMFLTKNFTIIGSILFV). Residues 233–239 (AALNYKQ) are Cytoplasmic-facing. Residues 240–257 (MELYHALPVFVFILARSI) form a helical membrane-spanning segment. At 258–268 (NKTQLFNSFRR) the chain is on the lumenal side. Residues 269–289 (ILTIGLFVVGTFLIIWLPFLL) traverse the membrane as a helical segment. Residues 290–332 (TGTAKDVIIRVFPFNRGLYEDKVASFWCAFSFILKRLPLQSVQ) are Cytoplasmic-facing. The helical transmembrane segment at 333–353 (IYISTALVLAGSAPSLLVLFL) threads the bilayer. Residues 354 to 359 (RPTEKQ) lie on the Lumenal side of the membrane. The helical transmembrane segment at 360 to 379 (FRISLTATGLSFFLFSFHVH) threads the bilayer. The Cytoplasmic portion of the chain corresponds to 380–382 (EKT). Residues 383-403 (ILLAAVPALLLISEYTSLVIW) traverse the membrane as a helical segment. Residues 404-420 (FLNITNISIFSLCVKDN) lie on the Lumenal side of the membrane. Residues 421–441 (FALSLSFFFAYFVVSYAYTAP) form a helical membrane-spanning segment. At 442–443 (RK) the chain is on the cytoplasmic side. A helical transmembrane segment spans residues 444 to 464 (ISHILTILIGFAICILELYGP). Topologically, residues 465-474 (SNQRFPHIYQ) are lumenal. Residues 475 to 495 (LANAFFSCVHFIYFLLYLSFA) traverse the membrane as a helical segment. Topologically, residues 496 to 503 (SFEKTKKE) are cytoplasmic.

Belongs to the ALG6/ALG8 glucosyltransferase family.

Its subcellular location is the endoplasmic reticulum membrane. It carries out the reaction an alpha-D-Man-(1-&gt;2)-alpha-D-Man-(1-&gt;2)-alpha-D-Man-(1-&gt;3)-[alpha-D-Man-(1-&gt;2)-alpha-D-Man-(1-&gt;3)-[alpha-D-Man-(1-&gt;2)-alpha-D-Man-(1-&gt;6)]-alpha-D-Man-(1-&gt;6)]-beta-D-Man-(1-&gt;4)-beta-D-GlcNAc-(1-&gt;4)-alpha-D-GlcNAc-diphospho-di-trans,poly-cis-dolichol + a di-trans,poly-cis-dolichyl beta-D-glucosyl phosphate = an alpha-D-Glc-(1-&gt;3)-alpha-D-Man-(1-&gt;2)-alpha-D-Man-(1-&gt;2)-alpha-D-Man-(1-&gt;3)-[alpha-D-Man-(1-&gt;2)-alpha-D-Man-(1-&gt;3)-[alpha-D-Man-(1-&gt;2)-alpha-D-Man-(1-&gt;6)]-alpha-D-Man-(1-&gt;6)]-beta-D-Man-(1-&gt;4)-beta-D-GlcNAc-(1-&gt;4)-alpha-D-GlcNAc-diphospho-di-trans,poly-cis-dolichol + a di-trans,poly-cis-dolichyl phosphate + H(+). It participates in protein modification; protein glycosylation. Functionally, adds the first glucose residue to the lipid-linked oligosaccharide precursor for N-linked glycosylation. Transfers glucose from dolichyl phosphate glucose (Dol-P-Glc) onto the lipid-linked oligosaccharide Man(9)GlcNAc(2)-PP-Dol. This chain is Probable dolichyl pyrophosphate Man9GlcNAc2 alpha-1,3-glucosyltransferase, found in Caenorhabditis elegans.